The following is a 265-amino-acid chain: Mlc titration factor A (265 aa).

Zn(2+) is bound by residues histidine 111, histidine 148, histidine 152, and glutamate 211.

Belongs to the MtfA family. Interacts with Mlc. Zn(2+) serves as cofactor.

It is found in the cytoplasm. Involved in the modulation of the activity of the glucose-phosphotransferase system (glucose-PTS). Interacts with the transcriptional repressor Mlc, preventing its interaction with DNA and leading to the modulation of expression of genes regulated by Mlc, including ptsG, which encodes the PTS system glucose-specific EIICB component. Its function is as follows. Shows zinc-dependent metallopeptidase activity. The chain is Mlc titration factor A from Escherichia coli O17:K52:H18 (strain UMN026 / ExPEC).